A 178-amino-acid chain; its full sequence is ATP synthase subunit delta (178 aa).

This sequence belongs to the ATPase delta chain family. F-type ATPases have 2 components, F(1) - the catalytic core - and F(0) - the membrane proton channel. F(1) has five subunits: alpha(3), beta(3), gamma(1), delta(1), epsilon(1). F(0) has three main subunits: a(1), b(2) and c(10-14). The alpha and beta chains form an alternating ring which encloses part of the gamma chain. F(1) is attached to F(0) by a central stalk formed by the gamma and epsilon chains, while a peripheral stalk is formed by the delta and b chains.

The protein localises to the cell membrane. F(1)F(0) ATP synthase produces ATP from ADP in the presence of a proton or sodium gradient. F-type ATPases consist of two structural domains, F(1) containing the extramembraneous catalytic core and F(0) containing the membrane proton channel, linked together by a central stalk and a peripheral stalk. During catalysis, ATP synthesis in the catalytic domain of F(1) is coupled via a rotary mechanism of the central stalk subunits to proton translocation. Functionally, this protein is part of the stalk that links CF(0) to CF(1). It either transmits conformational changes from CF(0) to CF(1) or is implicated in proton conduction. The chain is ATP synthase subunit delta from Desulfitobacterium hafniense (strain Y51).